A 356-amino-acid polypeptide reads, in one-letter code: MKTLTPPRVTDTTLRDGSHAMRHQFTREQVRAIVAALDEAGVPVIEVTHGDGLAGSSIQYGFSATSELELIEEAAKTAKRAKIAALLLPGIGTRRELSAAIERGIKVVRIATQCTEADISEQHFGMAKEMGLETVGFLMMAHMRPPEFLAEQAALMESYGADCVYIVDSAGAMLPDDVRRRVAALKERLSIQVGFHAHNNLGLAIGNTLAAIEEGADQVDGCLRGLGAGAGNAPTELIAAVLDKLGINPGLDVFKLMDAAEYIVAPIMPYQPIPDRDAITIGYAGVYSTFLLHARHIAAEFGLDPREILVELGRRQAVAGQEDWILDVALDILRRKRAAEGAGDAREPAAAERSAD.

Residues 7–257 (PRVTDTTLRD…NPGLDVFKLM (251 aa)) enclose the Pyruvate carboxyltransferase domain. 15 to 16 (RD) serves as a coordination point for substrate. Residue Asp-16 coordinates Mn(2+). Residue His-19 is the Proton acceptor of the active site. Ser-169 and His-196 together coordinate substrate. His-196 and His-198 together coordinate Mn(2+). Tyr-287 is a binding site for substrate.

It belongs to the 4-hydroxy-2-oxovalerate aldolase family.

It catalyses the reaction (S)-4-hydroxy-2-oxopentanoate = acetaldehyde + pyruvate. The chain is 4-hydroxy-2-oxovalerate aldolase from Thermomicrobium roseum (strain ATCC 27502 / DSM 5159 / P-2).